A 295-amino-acid chain; its full sequence is Lipase 2 (295 aa).

The signal sequence occupies residues 1–31; it reads MPKPALRRVMTATVAAVGTLALGLTDATAHA. The active-site Nucleophile is the S48. Intrachain disulfides connect C65-C89, C138-C152, and C205-C254. The active site involves H275.

It belongs to the 'GDSL' lipolytic enzyme family. Monomer.

The protein resides in the secreted. It carries out the reaction a triacylglycerol + H2O = a diacylglycerol + a fatty acid + H(+). Its activity is regulated as follows. Strongly inhibited by Ag(+). The cations Ca(2+) and Mg(2+) do not significantly reduce the lipolytic activity of SCO7513, whereas high concentrations of Co(2+) and Cu(2+) partially inhibit it. Is not inhibited by DTT in vitro. Is resistant to PMSF inhibition, except in the presence of Ca(2+). In terms of biological role, catalyzes the hydrolysis of fatty acid esters with a preference for long chain fatty acids (C16-C18). This is Lipase 2 from Streptomyces coelicolor (strain ATCC BAA-471 / A3(2) / M145).